A 114-amino-acid polypeptide reads, in one-letter code: DNA-directed RNA polymerase subunit omega (114 aa).

The protein belongs to the RNA polymerase subunit omega family. As to quaternary structure, the RNAP catalytic core consists of 2 alpha, 1 beta, 1 beta' and 1 omega subunit. When a sigma factor is associated with the core the holoenzyme is formed, which can initiate transcription.

The enzyme catalyses RNA(n) + a ribonucleoside 5'-triphosphate = RNA(n+1) + diphosphate. Its function is as follows. Promotes RNA polymerase assembly. Latches the N- and C-terminal regions of the beta' subunit thereby facilitating its interaction with the beta and alpha subunits. This is DNA-directed RNA polymerase subunit omega from Erythrobacter litoralis (strain HTCC2594).